A 347-amino-acid chain; its full sequence is MARNGNPQFPDERSTATRAKATEPEELDDRFSDLEPEEDSPFLRSQKRVPVRRGPLPSKKAANRVKIALIVLGVLVVIGGVWMALSAYGEHSWRFRLESSDSIEVGGNEHMSRGEITRVFGGDISRNIFAVPLDERKKQVEELPWVESATVMRILPDRIRVQVTERKPVAFAQIGSRVQLIDAHGVLMEMPFSTTNKYSFPVISGMHENEPLSTRSARMKIYQELVKELDASGEHNSKSLSEVDVSDPDDVKVTVEDADGAVLVHLGSQNFADRFHLYVTHLKEWRSQYQHLDSVDLRYDRQVILNPDSHPSAAKPTAPAVAPAVEKPAVAKPAVAKPTAHTSGRRH.

The segment at 1–55 (MARNGNPQFPDERSTATRAKATEPEELDDRFSDLEPEEDSPFLRSQKRVPVRRGP) is disordered. Residues 1–66 (MARNGNPQFP…PSKKAANRVK (66 aa)) are Cytoplasmic-facing. Residues 10-33 (PDERSTATRAKATEPEELDDRFSD) are compositionally biased toward basic and acidic residues. The chain crosses the membrane as a helical span at residues 67–87 (IALIVLGVLVVIGGVWMALSA). The Periplasmic segment spans residues 88–347 (YGEHSWRFRL…PTAHTSGRRH (260 aa)). The POTRA domain maps to 98-166 (ESSDSIEVGG…DRIRVQVTER (69 aa)). Residues 308 to 347 (DSHPSAAKPTAPAVAPAVEKPAVAKPAVAKPTAHTSGRRH) form a disordered region. Over residues 313-340 (AAKPTAPAVAPAVEKPAVAKPAVAKPTA) the composition is skewed to low complexity.

The protein belongs to the FtsQ/DivIB family. FtsQ subfamily.

The protein resides in the cell inner membrane. In terms of biological role, essential cell division protein. In Koribacter versatilis (strain Ellin345), this protein is Cell division protein FtsQ.